We begin with the raw amino-acid sequence, 127 residues long: Calcium-binding protein PBP1 (127 aa).

The segment covering 1-18 (MASPKSSTRPNQENQEPQ) has biased composition (polar residues). The interval 1-20 (MASPKSSTRPNQENQEPQFQ) is disordered. Residues 72-107 (LTDDDVRYMINEGDFDRDGALNQMEFCVLMFRLSPE) form the EF-hand domain. Asp85, Asp87, Asp89, and Glu96 together coordinate Ca(2+).

Interacts with PID.

In terms of biological role, potential calcium sensor that binds calcium in vitro. The chain is Calcium-binding protein PBP1 (PBP1) from Arabidopsis thaliana (Mouse-ear cress).